A 233-amino-acid polypeptide reads, in one-letter code: 2-C-methyl-D-erythritol 4-phosphate cytidylyltransferase (233 aa).

Belongs to the IspD/TarI cytidylyltransferase family. IspD subfamily.

It catalyses the reaction 2-C-methyl-D-erythritol 4-phosphate + CTP + H(+) = 4-CDP-2-C-methyl-D-erythritol + diphosphate. The protein operates within isoprenoid biosynthesis; isopentenyl diphosphate biosynthesis via DXP pathway; isopentenyl diphosphate from 1-deoxy-D-xylulose 5-phosphate: step 2/6. Functionally, catalyzes the formation of 4-diphosphocytidyl-2-C-methyl-D-erythritol from CTP and 2-C-methyl-D-erythritol 4-phosphate (MEP). The protein is 2-C-methyl-D-erythritol 4-phosphate cytidylyltransferase of Geotalea uraniireducens (strain Rf4) (Geobacter uraniireducens).